Here is a 190-residue protein sequence, read N- to C-terminus: Large ribosomal subunit protein eL19 (190 aa).

Disordered regions lie at residues 56–85 and 166–190; these read TVHSRSRARALKESKRAGRHMGYGKRKGTK and NRAARERRQQRLAEKKEALFAEAAN. Over residues 72 to 83 the composition is skewed to basic residues; it reads AGRHMGYGKRKG. The segment covering 166–184 has biased composition (basic and acidic residues); the sequence is NRAARERRQQRLAEKKEAL.

This sequence belongs to the eukaryotic ribosomal protein eL19 family. As to quaternary structure, component of the large ribosomal subunit. Mature ribosomes consist of a small (40S) and a large (60S) subunit. The 40S subunit contains about 32 different proteins and 1 molecule of RNA (18S). The 60S subunit contains 45 different proteins and 3 molecules of RNA (25S, 5.8S and 5S).

It localises to the cytoplasm. Functionally, component of the ribosome, a large ribonucleoprotein complex responsible for the synthesis of proteins in the cell. The small ribosomal subunit (SSU) binds messenger RNAs (mRNAs) and translates the encoded message by selecting cognate aminoacyl-transfer RNA (tRNA) molecules. The large subunit (LSU) contains the ribosomal catalytic site termed the peptidyl transferase center (PTC), which catalyzes the formation of peptide bonds, thereby polymerizing the amino acids delivered by tRNAs into a polypeptide chain. The nascent polypeptides leave the ribosome through a tunnel in the LSU and interact with protein factors that function in enzymatic processing, targeting, and the membrane insertion of nascent chains at the exit of the ribosomal tunnel. RPL19A may play a role in the last stages of translation initiation, in particular subunit joining and shedding/releasing factors. This chain is Large ribosomal subunit protein eL19, found in Candida albicans (strain SC5314 / ATCC MYA-2876) (Yeast).